We begin with the raw amino-acid sequence, 164 residues long: Cell division protein SepF (164 aa).

The segment at 21–71 is disordered; sequence YQQGQQPAQQQQSPVQAVPTPVPAPQQQAKRAPVTPLHKPSTTTRNAAPAE. Residues 22 to 49 are compositionally biased toward low complexity; it reads QQGQQPAQQQQSPVQAVPTPVPAPQQQA.

Belongs to the SepF family. As to quaternary structure, homodimer. Interacts with FtsZ.

The protein localises to the cytoplasm. In terms of biological role, cell division protein that is part of the divisome complex and is recruited early to the Z-ring. Probably stimulates Z-ring formation, perhaps through the cross-linking of FtsZ protofilaments. Its function overlaps with FtsA. The sequence is that of Cell division protein SepF from Clavibacter sepedonicus (Clavibacter michiganensis subsp. sepedonicus).